A 113-amino-acid chain; its full sequence is Cell cycle protein GpsB (113 aa).

Positions 32 to 70 (LDSVIKDYENFGKEIERMKNENDRLTDKVDELNKQVSAG) form a coiled coil.

The protein belongs to the GpsB family. In terms of assembly, forms polymers through the coiled coil domains. Interacts with PBP1, MreC and EzrA.

It localises to the cytoplasm. Its function is as follows. Divisome component that associates with the complex late in its assembly, after the Z-ring is formed, and is dependent on DivIC and PBP2B for its recruitment to the divisome. Together with EzrA, is a key component of the system that regulates PBP1 localization during cell cycle progression. Its main role could be the removal of PBP1 from the cell pole after pole maturation is completed. Also contributes to the recruitment of PBP1 to the division complex. Not essential for septum formation. The sequence is that of Cell cycle protein GpsB from Pediococcus pentosaceus (strain ATCC 25745 / CCUG 21536 / LMG 10740 / 183-1w).